The primary structure comprises 1116 residues: uncharacterized protein (1116 aa).

The chain crosses the membrane as a helical span at residues 3-20 (FFLTFLLFLFTLFSLFVY).

It is found in the membrane. This is an uncharacterized protein from Aquifex aeolicus (strain VF5).